Reading from the N-terminus, the 199-residue chain is Recombination protein RecR (199 aa).

Residues 58–73 (CQTCHHLSAEPTCEIC) form a C4-type zinc finger. Residues 81-175 (GQICVVADSR…RVSRIAYGLP (95 aa)) enclose the Toprim domain.

This sequence belongs to the RecR family.

May play a role in DNA repair. It seems to be involved in an RecBC-independent recombinational process of DNA repair. It may act with RecF and RecO. The protein is Recombination protein RecR of Synechococcus sp. (strain WH7803).